The sequence spans 187 residues: Putative manganese efflux pump MntP (187 aa).

Helical transmembrane passes span 3 to 23 (LSATLLLAFGMSMDAFAASIG), 41 to 61 (LIFGVIEAITPLVGWLLGLLA), 62 to 82 (TQFVLTWNHWIAFVLLVFLGG), 106 to 128 (LLVTTAFATSLDAMAVGVGLAFL), 142 to 162 (ATLIMSTLGMMVGRFIGPLLG), and 167 to 187 (ILGGVVLIGIGCQILWSHFAG).

Belongs to the MntP (TC 9.B.29) family.

It localises to the cell inner membrane. Functionally, probably functions as a manganese efflux pump. The chain is Putative manganese efflux pump MntP from Cronobacter sakazakii (strain ATCC BAA-894) (Enterobacter sakazakii).